The sequence spans 270 residues: 5-deoxy-glucuronate isomerase (270 aa).

It belongs to the isomerase IolB family.

It catalyses the reaction 5-deoxy-D-glucuronate = 5-dehydro-2-deoxy-D-gluconate. It participates in polyol metabolism; myo-inositol degradation into acetyl-CoA; acetyl-CoA from myo-inositol: step 4/7. In terms of biological role, involved in the isomerization of 5-deoxy-glucuronate (5DG) to 5-dehydro-2-deoxy-D-gluconate (DKG or 2-deoxy-5-keto-D-gluconate). This is 5-deoxy-glucuronate isomerase from Halalkalibacterium halodurans (strain ATCC BAA-125 / DSM 18197 / FERM 7344 / JCM 9153 / C-125) (Bacillus halodurans).